Here is a 294-residue protein sequence, read N- to C-terminus: UDP-3-O-acyl-N-acetylglucosamine deacetylase (294 aa).

3 residues coordinate Zn(2+): His-75, His-232, and Asp-236. The active-site Proton donor is His-259.

It belongs to the LpxC family. Zn(2+) is required as a cofactor.

It carries out the reaction a UDP-3-O-[(3R)-3-hydroxyacyl]-N-acetyl-alpha-D-glucosamine + H2O = a UDP-3-O-[(3R)-3-hydroxyacyl]-alpha-D-glucosamine + acetate. Its pathway is glycolipid biosynthesis; lipid IV(A) biosynthesis; lipid IV(A) from (3R)-3-hydroxytetradecanoyl-[acyl-carrier-protein] and UDP-N-acetyl-alpha-D-glucosamine: step 2/6. Its function is as follows. Catalyzes the hydrolysis of UDP-3-O-myristoyl-N-acetylglucosamine to form UDP-3-O-myristoylglucosamine and acetate, the committed step in lipid A biosynthesis. In Campylobacter curvus (strain 525.92), this protein is UDP-3-O-acyl-N-acetylglucosamine deacetylase.